The sequence spans 56 residues: Preprotein translocase subunit SecG (56 aa).

Over Met-1–Ser-29 the chain is Cytoplasmic. A helical membrane pass occupies residues Pro-30 to Gly-51. Over Pro-52–Gly-56 the chain is Extracellular.

Belongs to the SEC61-beta family. Component of the protein translocase complex. Heterotrimer consisting of alpha (SecY), beta (SecG) and gamma (SecE) subunits. Can form oligomers of the heterotrimer.

Its subcellular location is the cell membrane. Involved in protein export. The function of the beta subunit is unknown, but it may be involved in stabilization of the trimeric complex. In Thermococcus gammatolerans (strain DSM 15229 / JCM 11827 / EJ3), this protein is Preprotein translocase subunit SecG.